The primary structure comprises 62 residues: Photosystem II reaction center protein Z (62 aa).

2 consecutive transmembrane segments (helical) span residues 8–28 (SVFALITISFLLVIGVPVVLA) and 41–61 (FSGASLWIGLVFLVGILNSLI).

The protein belongs to the PsbZ family. In terms of assembly, PSII is composed of 1 copy each of membrane proteins PsbA, PsbB, PsbC, PsbD, PsbE, PsbF, PsbH, PsbI, PsbJ, PsbK, PsbL, PsbM, PsbT, PsbY, PsbZ, Psb30/Ycf12, at least 3 peripheral proteins of the oxygen-evolving complex and a large number of cofactors. It forms dimeric complexes.

It localises to the plastid. The protein localises to the chloroplast thylakoid membrane. Functionally, may control the interaction of photosystem II (PSII) cores with the light-harvesting antenna, regulates electron flow through the 2 photosystem reaction centers. PSII is a light-driven water plastoquinone oxidoreductase, using light energy to abstract electrons from H(2)O, generating a proton gradient subsequently used for ATP formation. This chain is Photosystem II reaction center protein Z, found in Psilotum nudum (Whisk fern).